The chain runs to 223 residues: Cytidylate kinase (223 aa).

12–20 (GPAGSGKST) contributes to the ATP binding site.

The protein belongs to the cytidylate kinase family. Type 1 subfamily.

It is found in the cytoplasm. The enzyme catalyses CMP + ATP = CDP + ADP. It catalyses the reaction dCMP + ATP = dCDP + ADP. In Onion yellows phytoplasma (strain OY-M), this protein is Cytidylate kinase.